Here is a 468-residue protein sequence, read N- to C-terminus: Ribosomal protein uS12 methylthiotransferase RimO (468 aa).

An MTTase N-terminal domain is found at 16-130 (NKIHFISLGC…ILSAIESRES (115 aa)). [4Fe-4S] cluster-binding residues include Cys-25, Cys-61, Cys-93, Cys-164, Cys-168, and Cys-171. The 233-residue stretch at 150–382 (STPKHYAYLK…SQIQKRNVDK (233 aa)) folds into the Radical SAM core domain. One can recognise a TRAM domain in the interval 385–455 (QKLIGEKIEA…GYDLVGRVVK (71 aa)).

It belongs to the methylthiotransferase family. RimO subfamily. [4Fe-4S] cluster serves as cofactor.

Its subcellular location is the cytoplasm. The enzyme catalyses L-aspartate(89)-[ribosomal protein uS12]-hydrogen + (sulfur carrier)-SH + AH2 + 2 S-adenosyl-L-methionine = 3-methylsulfanyl-L-aspartate(89)-[ribosomal protein uS12]-hydrogen + (sulfur carrier)-H + 5'-deoxyadenosine + L-methionine + A + S-adenosyl-L-homocysteine + 2 H(+). Catalyzes the methylthiolation of an aspartic acid residue of ribosomal protein uS12. The polypeptide is Ribosomal protein uS12 methylthiotransferase RimO (Chlamydia pneumoniae (Chlamydophila pneumoniae)).